The chain runs to 156 residues: Small ribosomal subunit protein uS7 (156 aa).

It belongs to the universal ribosomal protein uS7 family. Part of the 30S ribosomal subunit. Contacts proteins S9 and S11.

Functionally, one of the primary rRNA binding proteins, it binds directly to 16S rRNA where it nucleates assembly of the head domain of the 30S subunit. Is located at the subunit interface close to the decoding center, probably blocks exit of the E-site tRNA. The chain is Small ribosomal subunit protein uS7 from Streptococcus mutans serotype c (strain ATCC 700610 / UA159).